The sequence spans 209 residues: MSRTMIKNDLKQTDFTEAGEPFRLFAEWLRDAEQSEPNDPNATALATVDPEGMPNVRMVLLKGFDEQGFVFYTNFESAKGQEILSSMKAAMCFHWKSLRRQVRVRGPVEKVTDEEANAYYASRPRGSRIGAWASKQSRPLEGRFALEKAVAEYTAKYAVGEIPRPDYWSGFRIKPVSIEFWHDRPFRLHDRILFERESGGLWTKTRLYP.

Residues 57 to 62 (RMVLLK), 72 to 73 (YT), lysine 79, and glutamine 101 each bind FMN. Lysine 62 is a binding site for substrate. The substrate site is built by tyrosine 119, arginine 123, and serine 127. Residues 136 to 137 (QS) and tryptophan 181 contribute to the FMN site. 187–189 (RLH) lines the substrate pocket. Arginine 191 is an FMN binding site.

This sequence belongs to the pyridoxamine 5'-phosphate oxidase family. Homodimer. FMN serves as cofactor.

The catalysed reaction is pyridoxamine 5'-phosphate + O2 + H2O = pyridoxal 5'-phosphate + H2O2 + NH4(+). The enzyme catalyses pyridoxine 5'-phosphate + O2 = pyridoxal 5'-phosphate + H2O2. Its pathway is cofactor metabolism; pyridoxal 5'-phosphate salvage; pyridoxal 5'-phosphate from pyridoxamine 5'-phosphate: step 1/1. It functions in the pathway cofactor metabolism; pyridoxal 5'-phosphate salvage; pyridoxal 5'-phosphate from pyridoxine 5'-phosphate: step 1/1. Catalyzes the oxidation of either pyridoxine 5'-phosphate (PNP) or pyridoxamine 5'-phosphate (PMP) into pyridoxal 5'-phosphate (PLP). This chain is Pyridoxine/pyridoxamine 5'-phosphate oxidase, found in Chelativorans sp. (strain BNC1).